The sequence spans 372 residues: Alanine dehydrogenase 1 (372 aa).

The active site involves histidine 94. 170–200 is an NAD(+) binding site; the sequence is TYVIFGGGVAATNAANVALGLNAKVIIIELN.

It belongs to the AlaDH/PNT family.

The enzyme catalyses L-alanine + NAD(+) + H2O = pyruvate + NH4(+) + NADH + H(+). Its pathway is amino-acid degradation; L-alanine degradation via dehydrogenase pathway; NH(3) and pyruvate from L-alanine: step 1/1. May play a role in cell wall synthesis as L-alanine is an important constituent of the peptidoglycan layer. The protein is Alanine dehydrogenase 1 (ald1) of Staphylococcus aureus (strain USA300).